The chain runs to 314 residues: ATP synthase gamma chain (314 aa).

It belongs to the ATPase gamma chain family. In terms of assembly, F-type ATPases have 2 components, CF(1) - the catalytic core - and CF(0) - the membrane proton channel. CF(1) has five subunits: alpha(3), beta(3), gamma(1), delta(1), epsilon(1). CF(0) has three main subunits: a, b and c.

It is found in the cell membrane. Its function is as follows. Produces ATP from ADP in the presence of a proton gradient across the membrane. The gamma chain is believed to be important in regulating ATPase activity and the flow of protons through the CF(0) complex. The protein is ATP synthase gamma chain of Limosilactobacillus reuteri (strain DSM 20016) (Lactobacillus reuteri).